We begin with the raw amino-acid sequence, 434 residues long: Glutamate-1-semialdehyde 2,1-aminomutase (434 aa).

N6-(pyridoxal phosphate)lysine is present on Lys273.

It belongs to the class-III pyridoxal-phosphate-dependent aminotransferase family. HemL subfamily. Homodimer. Pyridoxal 5'-phosphate is required as a cofactor.

The protein resides in the cytoplasm. The catalysed reaction is (S)-4-amino-5-oxopentanoate = 5-aminolevulinate. It functions in the pathway porphyrin-containing compound metabolism; protoporphyrin-IX biosynthesis; 5-aminolevulinate from L-glutamyl-tRNA(Glu): step 2/2. The polypeptide is Glutamate-1-semialdehyde 2,1-aminomutase (Polynucleobacter asymbioticus (strain DSM 18221 / CIP 109841 / QLW-P1DMWA-1) (Polynucleobacter necessarius subsp. asymbioticus)).